Consider the following 100-residue polypeptide: UPF0213 protein YhbQ (100 aa).

Positions 2–77 constitute a GIY-YIG domain; it reads TPWFLYLIRT…KQLTKRQKER (76 aa).

The protein belongs to the UPF0213 family.

This chain is UPF0213 protein YhbQ, found in Shigella dysenteriae serotype 1 (strain Sd197).